The chain runs to 888 residues: Calcium-transporting ATPase 1 (888 aa).

4 helical membrane-spanning segments follow: residues 53–75, 79–97, 246–266, and 283–303; these read IFAQ…SAFV, ADAS…IGVV, VGKY…LIGF, and AVAA…AIGV. Residues Val284, Ala285, Ile287, and Glu289 each coordinate Ca(2+). The active-site 4-aspartylphosphate intermediate is the Asp331. The next 6 membrane-spanning stretches (helical) occupy residues 675–695, 703–723, 747–767, 791–811, 831–851, and 865–885; these read ILFL…AILL, PIHI…SLGV, VPFL…AFIA, LLHA…VHSF, LVFS…IPPL, and WGFV…IKLA. The Ca(2+) site is built by Asn710 and Asp714.

The protein belongs to the cation transport ATPase (P-type) (TC 3.A.3) family. Type IIA subfamily.

The protein resides in the cell membrane. The enzyme catalyses Ca(2+)(in) + ATP + H2O = Ca(2+)(out) + ADP + phosphate + H(+). With respect to regulation, inhibited by cyclopiazonic acid (CPA). Catalyzes the hydrolysis of ATP coupled with the transport of calcium. The chain is Calcium-transporting ATPase 1 from Bacillus cereus (strain ATCC 10987 / NRS 248).